Here is a 620-residue protein sequence, read N- to C-terminus: Ran-binding protein 10 (620 aa).

The disordered stretch occupies residues 1–38 (MAAATADPGAGNPQAGDSSGGDSGGGLPSPGEQELSRR). The residue at position 2 (Ala2) is an N-acetylalanine. Gly residues predominate over residues 18-28 (SSGGDSGGGLP). Residues 35–222 (LSRRLQRLYP…VDANFGQQPF (188 aa)) form the B30.2/SPRY domain. Positions 253–285 (WQAVLQNMVSSYLVHHGYCSTATAFARMTETPI) constitute a LisH domain. A CTLH domain is found at 291 to 348 (SIKNRQKIQKLVLEGRVGEAIETTQRFYPGLLEHNPNLLFMLKCRQFVEMVNGTDSEV). Residues 347 to 398 (EVRSLSSRSPKSQDSYPGSPSLSPRHGPSSSHIHNTGADSPSCSNGVASTKN) are compositionally biased toward polar residues. The interval 347–460 (EVRSLSSRSP…SDSEMEMEAE (114 aa)) is disordered. Phosphoserine is present on Ser361. Tyr362 carries the post-translational modification Phosphotyrosine. A phosphoserine mark is found at Ser365, Ser367, Ser369, and Ser422. The span at 409–436 (SSSSSSSSSSSSSSPSSVNYSESNSTDS) shows a compositional bias: low complexity. Residues 437-450 (TKSQPHSSTSNQET) show a composition bias toward polar residues. A phosphoserine mark is found at Ser451 and Ser453.

This sequence belongs to the RANBP9/10 family. May form homodimers. Identified in the CTLH complex that contains GID4, RANBP9 and/or RANBP10, MKLN1, MAEA, RMND5A (or alternatively its paralog RMND5B), GID8, ARMC8, WDR26 and YPEL5. Within this complex, MAEA, RMND5A (or alternatively its paralog RMND5B), GID8, WDR26, and RANBP9 and/or RANBP10 form the catalytic core, while GID4, MKLN1, ARMC8 and YPEL5 have ancillary roles. Interacts with RAN and RANBP9. Interacts with the HGF receptor MET. Interacts with AR. Interacts with TUBB1. Interacts with YPEL5. May interact with TUBB5. Interacts with DDX4. Expressed at highest levels in spleen and liver. Expressed in megakaryocytes and platelets (at protein level).

The protein localises to the cytoplasm. It localises to the nucleus. May act as an adapter protein to couple membrane receptors to intracellular signaling pathways. Core component of the CTLH E3 ubiquitin-protein ligase complex that selectively accepts ubiquitin from UBE2H and mediates ubiquitination and subsequent proteasomal degradation of the transcription factor HBP1. Enhances dihydrotestosterone-induced transactivation activity of AR, as well as dexamethasone-induced transactivation activity of NR3C1, but does not affect estrogen-induced transactivation. Acts as a guanine nucleotide exchange factor (GEF) for RAN GTPase. May play an essential role in hemostasis and in maintaining microtubule dynamics with respect to both platelet shape and function. The polypeptide is Ran-binding protein 10 (Ranbp10) (Mus musculus (Mouse)).